We begin with the raw amino-acid sequence, 92 residues long: Small ribosomal subunit protein uS19c (92 aa).

It belongs to the universal ribosomal protein uS19 family.

The protein resides in the plastid. It localises to the chloroplast. Functionally, protein S19 forms a complex with S13 that binds strongly to the 16S ribosomal RNA. The chain is Small ribosomal subunit protein uS19c from Illicium oligandrum (Star anise).